We begin with the raw amino-acid sequence, 135 residues long: ATP synthase epsilon chain (135 aa).

It belongs to the ATPase epsilon chain family. F-type ATPases have 2 components, CF(1) - the catalytic core - and CF(0) - the membrane proton channel. CF(1) has five subunits: alpha(3), beta(3), gamma(1), delta(1), epsilon(1). CF(0) has three main subunits: a, b and c.

It is found in the cell inner membrane. Functionally, produces ATP from ADP in the presence of a proton gradient across the membrane. In Desulforapulum autotrophicum (strain ATCC 43914 / DSM 3382 / VKM B-1955 / HRM2) (Desulfobacterium autotrophicum), this protein is ATP synthase epsilon chain.